A 256-amino-acid polypeptide reads, in one-letter code: Eukaryotic translation initiation factor 3 subunit J (256 aa).

Acidic residues-rich tracts occupy residues 1 to 14 and 35 to 54; these read MAENDSWDADDFEP and EGEDEEEDVKDNWDDEEEAE. Disordered regions lie at residues 1-109 and 214-237; these read MAEN…SPEE and QSKAKKKKKGVVPGGGLKANMKND. The span at 55-101 shows a compositional bias: basic and acidic residues; the sequence is AATKQEAQKTVEPKVSEKKKLLEKIREKEKLHKKRQEEVNQQEKEGT. Residues 70-99 adopt a coiled-coil conformation; the sequence is SEKKKLLEKIREKEKLHKKRQEEVNQQEKE.

It belongs to the eIF-3 subunit J family. Component of the eukaryotic translation initiation factor 3 (eIF-3) complex, which is composed of 13 subunits: eif3a, eif3b, eif3c, eif3d, eif3e, eif3f, eif3g, eif3h, eif3i, eif3j, eif3k, eif3l and eif3m.

It localises to the cytoplasm. Its function is as follows. Component of the eukaryotic translation initiation factor 3 (eIF-3) complex, which is involved in protein synthesis of a specialized repertoire of mRNAs and, together with other initiation factors, stimulates binding of mRNA and methionyl-tRNAi to the 40S ribosome. The eIF-3 complex specifically targets and initiates translation of a subset of mRNAs involved in cell proliferation. The polypeptide is Eukaryotic translation initiation factor 3 subunit J (eif3j) (Xenopus tropicalis (Western clawed frog)).